The following is a 473-amino-acid chain: Spliceosome-associated protein CWC27 homolog (473 aa).

The residue at position 2 (Ser-2) is an N-acetylserine. The 156-residue stretch at 11–166 folds into the PPIase cyclophilin-type domain; the sequence is TNGKVLLKTT…NSHKIRSCEV (156 aa). The segment covering 178–193 has biased composition (basic and acidic residues); it reads EIKKPKKEKPEEEVKK. Disordered stretches follow at residues 178 to 197, 203 to 383, and 401 to 473; these read EIKK…LKPK, SLLS…TSRE, and IAET…KERR. Positions 206-230 form a coiled coil; it reads SFGEEAEEEEEEVNRVSQSMKGKSK. Positions 231–241 are enriched in basic and acidic residues; it reads SSHDLLKDDPH. The Cell attachment site signature appears at 252-254; it reads RGD. Positions 256-266 are enriched in acidic residues; it reads AEDSDDDGEYE. Composition is skewed to basic and acidic residues over residues 267-348 and 360-372; these read GAEH…KRSE and EYRR…EALR. Positions 311 to 378 form a coiled coil; it reads VSRSEELRKE…EALRKQQAKT (68 aa). Ser-347 carries the phosphoserine modification. Acidic residues predominate over residues 405–419; that stretch reads PENDISETEVEDDEG. Composition is skewed to basic and acidic residues over residues 426–438 and 458–473; these read QFED…KDAS and RREE…KERR.

It belongs to the cyclophilin-type PPIase family. In terms of assembly, part of the activated spliceosome B/catalytic step 1 spliceosome, one of the forms of the spliceosome which has a well-formed active site but still cannot catalyze the branching reaction and is composed at least of 52 proteins, the U2, U5 and U6 snRNAs and the pre-mRNA. Recruited during early steps of activated spliceosome B maturation, it is probably one of the first proteins released from this complex as he matures to the spliceosome C complex. Component of the minor spliceosome, which splices U12-type introns.

It localises to the nucleus. As part of the spliceosome, plays a role in pre-mRNA splicing. Probable inactive PPIase with no peptidyl-prolyl cis-trans isomerase activity. As a component of the minor spliceosome, involved in the splicing of U12-type introns in pre-mRNAs. This is Spliceosome-associated protein CWC27 homolog from Bos taurus (Bovine).